We begin with the raw amino-acid sequence, 290 residues long: Festuclavine dehydrogenase easG (290 aa).

The protein belongs to the fgaFS/easG family.

It catalyses the reaction festuclavine + NAD(+) = 6,8-dimethyl-6,7-didehydroergoline + NADH + H(+). It functions in the pathway alkaloid biosynthesis; ergot alkaloid biosynthesis. Functionally, festuclavine dehydrogenase; part of the gene cluster that mediates the biosynthesis of fumiclavanine C, a fungal ergot alkaloid. DmaW catalyzes the first step of ergot alkaloid biosynthesis by condensing dimethylallyl diphosphate (DMAP) and tryptophan to form 4-dimethylallyl-L-tryptophan. The second step is catalyzed by the methyltransferase easF that methylates 4-dimethylallyl-L-tryptophan in the presence of S-adenosyl-L-methionine, resulting in the formation of 4-dimethylallyl-L-abrine. The catalase easC and the FAD-dependent oxidoreductase easE then transform 4-dimethylallyl-L-abrine to chanoclavine-I which is further oxidized by EasD in the presence of NAD(+), resulting in the formation of chanoclavine-I aldehyde. EasA reduces chanoclavine-I aldehyde to dihydrochanoclavine-I aldehyde that spontaneously dehydrates to form 6,8-dimethyl-6,7-didehydroergoline. EasG then catalyzes the reduction of 6,8-dimethyl-6,7-didehydroergoline to form festuclavine. Hydrolysis of festuclavine by easM then leads to the formation of fumigaclavine B which is in turn acetylated by easN to fumigaclavine A. Finally, easL catalyzes the conversion of fumigaclavine A into fumigaclavine C by attaching a dimethylallyl moiety to C-2 of the indole nucleus. The chain is Festuclavine dehydrogenase easG from Aspergillus fumigatus (strain ATCC MYA-4609 / CBS 101355 / FGSC A1100 / Af293) (Neosartorya fumigata).